We begin with the raw amino-acid sequence, 101 residues long: MLSLSHYLVLGAILFAISVVGIFLNRKNLIVLLMAIELMLLAVNLNFIAFSHYLGDLAGQIFVFFILTVAAAESAIGLAILVVLFRNLRTIHVDDLDSLKG.

3 helical membrane passes run 4 to 24 (LSHY…GIFL), 30 to 50 (IVLL…FIAF), and 61 to 81 (IFVF…LAIL).

Belongs to the complex I subunit 4L family. As to quaternary structure, NDH-1 is composed of 14 different subunits. Subunits NuoA, H, J, K, L, M, N constitute the membrane sector of the complex.

It is found in the cell inner membrane. The enzyme catalyses a quinone + NADH + 5 H(+)(in) = a quinol + NAD(+) + 4 H(+)(out). Functionally, NDH-1 shuttles electrons from NADH, via FMN and iron-sulfur (Fe-S) centers, to quinones in the respiratory chain. The immediate electron acceptor for the enzyme in this species is believed to be ubiquinone. Couples the redox reaction to proton translocation (for every two electrons transferred, four hydrogen ions are translocated across the cytoplasmic membrane), and thus conserves the redox energy in a proton gradient. In Aromatoleum aromaticum (strain DSM 19018 / LMG 30748 / EbN1) (Azoarcus sp. (strain EbN1)), this protein is NADH-quinone oxidoreductase subunit K.